A 235-amino-acid chain; its full sequence is Small ribosomal subunit protein eS4 (235 aa).

The S4 RNA-binding domain occupies 38–101 (IPLLVLVRDF…EKSYRILFDE (64 aa)).

This sequence belongs to the eukaryotic ribosomal protein eS4 family.

The chain is Small ribosomal subunit protein eS4 (rps4e) from Archaeoglobus fulgidus (strain ATCC 49558 / DSM 4304 / JCM 9628 / NBRC 100126 / VC-16).